Here is a 92-residue protein sequence, read N- to C-terminus: Small ribosomal subunit protein uS19c (92 aa).

It belongs to the universal ribosomal protein uS19 family.

It localises to the plastid. It is found in the chloroplast. In terms of biological role, protein S19 forms a complex with S13 that binds strongly to the 16S ribosomal RNA. This chain is Small ribosomal subunit protein uS19c, found in Phalaenopsis aphrodite subsp. formosana (Moth orchid).